We begin with the raw amino-acid sequence, 191 residues long: Glycerol-3-phosphate acyltransferase (191 aa).

Transmembrane regions (helical) follow at residues 5 to 25 (IVFV…ITKI), 50 to 70 (CIAA…VYIA), 78 to 98 (SFHM…PVWL), 112 to 132 (ILIA…LAVF), and 153 to 173 (SFFF…LIFF).

The protein belongs to the PlsY family. In terms of assembly, probably interacts with PlsX.

It localises to the cell membrane. The catalysed reaction is an acyl phosphate + sn-glycerol 3-phosphate = a 1-acyl-sn-glycero-3-phosphate + phosphate. It functions in the pathway lipid metabolism; phospholipid metabolism. Functionally, catalyzes the transfer of an acyl group from acyl-phosphate (acyl-PO(4)) to glycerol-3-phosphate (G3P) to form lysophosphatidic acid (LPA). This enzyme utilizes acyl-phosphate as fatty acyl donor, but not acyl-CoA or acyl-ACP. The sequence is that of Glycerol-3-phosphate acyltransferase from Wolbachia sp. subsp. Brugia malayi (strain TRS).